The primary structure comprises 945 residues: Glutamyl aminopeptidase (945 aa).

Topologically, residues 1 to 18 (MNFAEEEPSKKYCIKGKH) are cytoplasmic. The chain crosses the membrane as a helical; Signal-anchor for type II membrane protein span at residues 19–39 (VAIICGVVVAVGLIVGLSVGL). Residues 40-945 (TRSCEQDTTP…SIREWFASLP (906 aa)) lie on the Extracellular side of the membrane. The disordered stretch occupies residues 43–77 (CEQDTTPAPSQPPPEASTALPPQDQNVCPDSEDES). N-linked (GlcNAc...) asparagine glycosylation is found at N116 and N189. E215 serves as a coordination point for substrate. N316 is a glycosylation site (N-linked (GlcNAc...) asparagine). 349 to 353 (GAMEN) serves as a coordination point for substrate. A Zn(2+)-binding site is contributed by H385. Residue E386 is the Proton acceptor of the active site. Residues H389 and E408 each contribute to the Zn(2+) site. Residues N546, N601, N637, N669, N754, and N792 are each glycosylated (N-linked (GlcNAc...) asparagine). R878 serves as a coordination point for substrate.

Belongs to the peptidase M1 family. In terms of assembly, homodimer; disulfide-linked. Zn(2+) is required as a cofactor. In terms of tissue distribution, early B-lineage cells and certain stromal cell of hemopoietic tissues. Also expressed by capillary endothelial cells, placenta, and epithelial cells of the intestine and proximal renal tubules.

It localises to the cell membrane. The catalysed reaction is Release of N-terminal glutamate (and to a lesser extent aspartate) from a peptide.. With respect to regulation, substrate specificity is modulated by calcium which enhances the enzymatic activity for cleavage of acidic residues while reducing its activity with basic residues. Inhibited by aminopeptidase inhibitors amastatin and bestatin. Functionally, regulates central hypertension through its calcium-modulated preference to cleave N-terminal acidic residues from peptides such as angiotensin II. This chain is Glutamyl aminopeptidase (Enpep), found in Mus musculus (Mouse).